The primary structure comprises 132 residues: Large ribosomal subunit protein uL14 (132 aa).

The protein belongs to the universal ribosomal protein uL14 family. Part of the 50S ribosomal subunit. Forms a cluster with proteins L3 and L24e, part of which may contact the 16S rRNA in 2 intersubunit bridges.

In terms of biological role, binds to 23S rRNA. Forms part of two intersubunit bridges in the 70S ribosome. The protein is Large ribosomal subunit protein uL14 of Methanocella arvoryzae (strain DSM 22066 / NBRC 105507 / MRE50).